Reading from the N-terminus, the 552-residue chain is Arginine--tRNA ligase (552 aa).

Positions 123-133 (ANPTGPLTIGR) match the 'HIGH' region motif.

It belongs to the class-I aminoacyl-tRNA synthetase family. As to quaternary structure, monomer.

It localises to the cytoplasm. It catalyses the reaction tRNA(Arg) + L-arginine + ATP = L-arginyl-tRNA(Arg) + AMP + diphosphate. This Pelodictyon phaeoclathratiforme (strain DSM 5477 / BU-1) protein is Arginine--tRNA ligase.